Consider the following 192-residue polypeptide: NADH-quinone oxidoreductase subunit C (192 aa).

The segment at 170 to 192 (LGGIPVEYKGATVPPPDERRQYA) is disordered.

This sequence belongs to the complex I 30 kDa subunit family. As to quaternary structure, NDH-1 is composed of 14 different subunits. Subunits NuoB, C, D, E, F, and G constitute the peripheral sector of the complex.

Its subcellular location is the cell membrane. It catalyses the reaction a quinone + NADH + 5 H(+)(in) = a quinol + NAD(+) + 4 H(+)(out). Its function is as follows. NDH-1 shuttles electrons from NADH, via FMN and iron-sulfur (Fe-S) centers, to quinones in the respiratory chain. The immediate electron acceptor for the enzyme in this species is believed to be a menaquinone. Couples the redox reaction to proton translocation (for every two electrons transferred, four hydrogen ions are translocated across the cytoplasmic membrane), and thus conserves the redox energy in a proton gradient. This chain is NADH-quinone oxidoreductase subunit C, found in Acidothermus cellulolyticus (strain ATCC 43068 / DSM 8971 / 11B).